The sequence spans 440 residues: Transposon Ty1-DR2 Gag polyprotein (440 aa).

2 stretches are compositionally biased toward polar residues: residues 1 to 31 (MESQQLSQHSPISHGSACASVTSKEVQTTQD) and 137 to 168 (VGTHLNTPSPESGNSFPDSSSAKSNMTSTNQH). Disordered regions lie at residues 1–75 (MESQ…PQAA), 137–174 (VGTHLNTPSPESGNSFPDSSSAKSNMTSTNQHVRPPPI), and 350–440 (QQES…PGTY). Positions 299–401 (NNGIPINNKV…NSQSRTARAH (103 aa)) are RNA-binding. Basic and acidic residues predominate over residues 363–372 (SPSDEKKDSR). Polar residues predominate over residues 373–409 (TYTNTTKPKSITRNSQKPNNSQSRTARAHNVSTSNNF). Over residues 429–440 (NKHDLHLRPGTY) the composition is skewed to basic and acidic residues.

As to quaternary structure, homotrimer.

It localises to the cytoplasm. Capsid protein (CA) is the structural component of the virus-like particle (VLP), forming the shell that encapsulates the retrotransposons dimeric RNA genome. The particles are assembled from trimer-clustered units and there are holes in the capsid shells that allow for the diffusion of macromolecules. CA also has nucleocapsid-like chaperone activity, promoting primer tRNA(i)-Met annealing to the multipartite primer-binding site (PBS), dimerization of Ty1 RNA and initiation of reverse transcription. The protein is Transposon Ty1-DR2 Gag polyprotein (TY1A-DR2) of Saccharomyces cerevisiae (strain ATCC 204508 / S288c) (Baker's yeast).